The primary structure comprises 468 residues: COBRA-like protein 5 (468 aa).

Residues 1–22 form the signal peptide; that stretch reads MELHRCSLLALLLAVTCSVAVA. N-linked (GlcNAc...) asparagine glycosylation is found at Asn-31, Asn-156, Asn-164, and Asn-228. The disordered stretch occupies residues 251 to 278; the sequence is GGGKNARAGDGRSRRNSGGGGGHSGGTE. 3 N-linked (GlcNAc...) asparagine glycosylation sites follow: Asn-340, Asn-355, and Asn-374. Asn-443 carries GPI-anchor amidated asparagine lipidation. A propeptide spans 444–468 (removed in mature form); sequence SAPIGPPRSVAAAASAILVVLLLVA.

The protein belongs to the COBRA family. Expressed mainly in developing sclerenchyma cells and in vascular bundles.

The protein resides in the cell membrane. Functionally, involved in determining the orientation of cell expansion, probably by playing an important role in cellulose deposition. May act by recruiting cellulose synthesizing complexes to discrete positions on the cell surface. The sequence is that of COBRA-like protein 5 (BC1) from Oryza sativa subsp. indica (Rice).